Here is a 509-residue protein sequence, read N- to C-terminus: Dihydrolipoyl dehydrogenase, mitochondrial (509 aa).

The N-terminal 35 residues, 1 to 35 (MQSWSRVYCSLAKKGHFNRLSHGLQGASSVPLRTY), are a transit peptide targeting the mitochondrion. Lysine 66 bears the N6-acetyllysine; alternate mark. Lysine 66 carries the N6-succinyllysine; alternate modification. FAD is bound by residues 71-80 (EKNETLGGTC) and lysine 89. An intrachain disulfide couples cysteine 80 to cysteine 85. An N6-acetyllysine; alternate mark is found at lysine 104, lysine 122, lysine 132, and lysine 143. 4 positions are modified to N6-succinyllysine; alternate: lysine 104, lysine 122, lysine 132, and lysine 143. Glycine 154 is an FAD binding site. Position 159 is an N6-succinyllysine (lysine 159). An FAD-binding site is contributed by 183-185 (TGS). Residues 220-227 (GAGVIGVE) and glutamate 243 contribute to the NAD(+) site. Residues lysine 273 and lysine 277 each carry the N6-succinyllysine modification. Valine 278 contacts NAD(+). Serine 285 and serine 297 each carry phosphoserine. Glycine 314 is an NAD(+) binding site. Lysine 346 carries the post-translational modification N6-acetyllysine. FAD-binding positions include aspartate 355 and 361-364 (MLAH). Lysine 410 bears the N6-acetyllysine; alternate mark. Lysine 410 is subject to N6-succinyllysine; alternate. An N6-acetyllysine mark is found at lysine 417 and lysine 420. An N6-succinyllysine modification is found at lysine 430. The active-site Proton acceptor is the histidine 487. Serine 502 is subject to Phosphoserine. At lysine 505 the chain carries N6-acetyllysine; alternate. Position 505 is an N6-succinyllysine; alternate (lysine 505).

Belongs to the class-I pyridine nucleotide-disulfide oxidoreductase family. As to quaternary structure, homodimer. Part of the multimeric pyruvate dehydrogenase complex that contains multiple copies of pyruvate dehydrogenase (subunits PDHA (PDHA1 or PDHA2) and PDHB, E1), dihydrolipoamide acetyltransferase (DLAT, E2) and lipoamide dehydrogenase (DLD, E3). These subunits are bound to an inner core composed of about 48 DLAT and 12 PDHX molecules (by non covalent bonds). The 2-oxoglutarate dehydrogenase complex is composed of OGDH (2-oxoglutarate dehydrogenase; E1), DLST (dihydrolipoamide succinyltransferase; E2), DLD (dihydrolipoamide dehydrogenase; E3) and the assembly factor KGD4. It contains multiple copies of the three enzymatic components (E1, E2 and E3). In the nucleus, the 2-oxoglutarate dehydrogenase complex associates with KAT2A. Interacts with PDHX. The cofactor is FAD. In terms of processing, tyrosine phosphorylated.

The protein resides in the mitochondrion matrix. The protein localises to the nucleus. Its subcellular location is the cell projection. It is found in the cilium. It localises to the flagellum. The protein resides in the cytoplasmic vesicle. The protein localises to the secretory vesicle. Its subcellular location is the acrosome. The enzyme catalyses N(6)-[(R)-dihydrolipoyl]-L-lysyl-[protein] + NAD(+) = N(6)-[(R)-lipoyl]-L-lysyl-[protein] + NADH + H(+). Lipoamide dehydrogenase is a component of the glycine cleavage system as well as an E3 component of three alpha-ketoacid dehydrogenase complexes (pyruvate-, alpha-ketoglutarate-, and branched-chain amino acid-dehydrogenase complex). The 2-oxoglutarate dehydrogenase complex is mainly active in the mitochondrion. A fraction of the 2-oxoglutarate dehydrogenase complex also localizes in the nucleus and is required for lysine succinylation of histones: associates with KAT2A on chromatin and provides succinyl-CoA to histone succinyltransferase KAT2A. In monomeric form may have additional moonlighting function as serine protease. Involved in the hyperactivation of spermatazoa during capacitation and in the spermatazoal acrosome reaction. The polypeptide is Dihydrolipoyl dehydrogenase, mitochondrial (Dld) (Rattus norvegicus (Rat)).